The primary structure comprises 333 residues: MEATDIWGEIERSESYLVCSMYEEAESLSSSILKRIFGNIDVLSDEASQGDHQFHDMLESAGMVLVQSLHGIGRTVEIVNELRDVFGEVAAIPVQVLLTGVCLQISNGSYLGVRDILEEFFRIWVYKDNHYILNDAGVSTKGFHAKNCLDIDEYMEVVELYTFGVLAKFSNDMGLAISWVEKAALPEERRQGILRRLHSLLSLKTASSFEENSKDSSYAVVNNKKSLGNEKNDEIDSFLKLSKQHEPWSLWSSHPLSLKVGNTQFSMSRGKVAVSLVGLIICYALKRKRAALIRIIRRQMESTRKAIVDFWKLAFSYQVNPLAAIQSIPSTTT.

The Cytoplasmic portion of the chain corresponds to 1–90; it reads MEATDIWGEI…ELRDVFGEVA (90 aa). Residues 91–102 form a helical membrane-spanning segment; it reads AIPVQVLLTGVC. The Peroxisomal portion of the chain corresponds to 103–268; that stretch reads LQISNGSYLG…KVGNTQFSMS (166 aa). The helical transmembrane segment at 269 to 285 threads the bilayer; it reads RGKVAVSLVGLIICYAL. The Cytoplasmic portion of the chain corresponds to 286 to 333; sequence KRKRAALIRIIRRQMESTRKAIVDFWKLAFSYQVNPLAAIQSIPSTTT.

In terms of assembly, interacts with PEX6 and PEX19-1, but not with PEX1. Interacts (via N-terminus) with PEX13, and (via N-terminus and C-terminus) with PEX16. As to expression, expressed in roots, leaves, stems, flowers, buds and fruits.

The protein localises to the peroxisome membrane. Involved in peroxisome biogenesis and matrix protein import. Required for pollen maturation and in vivo germination via its role in peroxisomal function, which partially involves jasmonic acid biosynthesis. Transported to peroxisomes via the interaction with PEX19-1. Required for peroxisomal protein import by acting as an anchoring protein for the AAA ATPase complex, which consists of PEX1 and PEX6. This Arabidopsis thaliana (Mouse-ear cress) protein is Protein APEM9.